Here is a 142-residue protein sequence, read N- to C-terminus: MAKKVMAMVKLQIPAGKATPAPPVGPALGQHGVNIMAFVKEYNERTAGQVGLIIPVEITVYADRTFSFVTKTPPASVLLKKAAGIETASGQPHVKKVGKVTRTKVREIAELKMPDLNAADVEAAVRMVEGTARSMGIEIVEG.

The protein belongs to the universal ribosomal protein uL11 family. Part of the ribosomal stalk of the 50S ribosomal subunit. Interacts with L10 and the large rRNA to form the base of the stalk. L10 forms an elongated spine to which L12 dimers bind in a sequential fashion forming a multimeric L10(L12)X complex. Post-translationally, one or more lysine residues are methylated.

Functionally, forms part of the ribosomal stalk which helps the ribosome interact with GTP-bound translation factors. This is Large ribosomal subunit protein uL11 from Desulforudis audaxviator (strain MP104C).